Consider the following 248-residue polypeptide: 3-deoxy-manno-octulosonate cytidylyltransferase (248 aa).

This sequence belongs to the KdsB family.

Its subcellular location is the cytoplasm. It carries out the reaction 3-deoxy-alpha-D-manno-oct-2-ulosonate + CTP = CMP-3-deoxy-beta-D-manno-octulosonate + diphosphate. It participates in nucleotide-sugar biosynthesis; CMP-3-deoxy-D-manno-octulosonate biosynthesis; CMP-3-deoxy-D-manno-octulosonate from 3-deoxy-D-manno-octulosonate and CTP: step 1/1. The protein operates within bacterial outer membrane biogenesis; lipopolysaccharide biosynthesis. Its function is as follows. Activates KDO (a required 8-carbon sugar) for incorporation into bacterial lipopolysaccharide in Gram-negative bacteria. This chain is 3-deoxy-manno-octulosonate cytidylyltransferase, found in Salmonella arizonae (strain ATCC BAA-731 / CDC346-86 / RSK2980).